The chain runs to 614 residues: Phosphomethylpyrimidine synthase (614 aa).

Substrate is bound by residues asparagine 230, methionine 259, tyrosine 288, histidine 324, 344 to 346, 385 to 388, and glutamate 424; these read SRG and DGLR. Histidine 428 lines the Zn(2+) pocket. Substrate is bound at residue tyrosine 451. Zn(2+) is bound at residue histidine 492. Positions 572, 575, and 580 each coordinate [4Fe-4S] cluster.

This sequence belongs to the ThiC family. Homodimer. [4Fe-4S] cluster serves as cofactor.

It catalyses the reaction 5-amino-1-(5-phospho-beta-D-ribosyl)imidazole + S-adenosyl-L-methionine = 4-amino-2-methyl-5-(phosphooxymethyl)pyrimidine + CO + 5'-deoxyadenosine + formate + L-methionine + 3 H(+). Its pathway is cofactor biosynthesis; thiamine diphosphate biosynthesis. Catalyzes the synthesis of the hydroxymethylpyrimidine phosphate (HMP-P) moiety of thiamine from aminoimidazole ribotide (AIR) in a radical S-adenosyl-L-methionine (SAM)-dependent reaction. In Stenotrophomonas maltophilia (strain K279a), this protein is Phosphomethylpyrimidine synthase.